Reading from the N-terminus, the 229-residue chain is ATPase SWSAP1 (229 aa).

Residues 209-229 (PWPTQAGDPSSGKGSSSGGQP) are disordered.

Interacts with ZSWIM7; they form a functional complex involved in homologous recombination repair and stabilize each other. Interacts with RAD51, RAD51B, RAD51C, RAD51D and XRCC3; involved in homologous recombination repair.

It is found in the nucleus. Its function is as follows. ATPase which is preferentially stimulated by single-stranded DNA and is involved in homologous recombination repair (HRR). Has a DNA-binding activity which is independent of its ATPase activity. The chain is ATPase SWSAP1 (SWSAP1) from Homo sapiens (Human).